We begin with the raw amino-acid sequence, 1408 residues long: DNA-directed RNA polymerase subunit beta (1408 aa).

Positions 1383 to 1408 (PERQRSFGGDFLGGGDGEERKTGTEA) are disordered. Over residues 1399 to 1408 (GEERKTGTEA) the composition is skewed to basic and acidic residues.

This sequence belongs to the RNA polymerase beta chain family. The RNAP catalytic core consists of 2 alpha, 1 beta, 1 beta' and 1 omega subunit. When a sigma factor is associated with the core the holoenzyme is formed, which can initiate transcription.

It carries out the reaction RNA(n) + a ribonucleoside 5'-triphosphate = RNA(n+1) + diphosphate. Functionally, DNA-dependent RNA polymerase catalyzes the transcription of DNA into RNA using the four ribonucleoside triphosphates as substrates. This chain is DNA-directed RNA polymerase subunit beta, found in Myxococcus xanthus (strain DK1622).